Here is a 117-residue protein sequence, read N- to C-terminus: Ig heavy chain V region 1-62-3 (117 aa).

Residues 1 to 19 form the signal peptide; sequence MGWSCIMLFLAATATGVHF. Residues 20 to 49 are framework-1; sequence QVQLQQPGAELVKPGASVKLSSKASGYTFT. The complementarity-determining-1 stretch occupies residues 50-54; the sequence is SYWMH. Residues 55 to 68 are framework-2; the sequence is WVKQRPGRGLEWIG. The tract at residues 69 to 85 is complementarity-determining-2; the sequence is RIDPNSGGTKYNEKFKS. The segment at 86–117 is framework-3; it reads KATLTVDKPSSTAYMQLSSLTSEDSAVYYCAR.

This is Ig heavy chain V region 1-62-3 (Ighv1-62-3) from Mus musculus (Mouse).